The chain runs to 414 residues: Sex comb on midleg-like protein 4 (414 aa).

Phosphoserine occurs at positions 55 and 65. Residues 257 to 276 (HRGSLHPSSSLYCKRQNSGD) show a composition bias toward polar residues. The tract at residues 257–343 (HRGSLHPSSS…DARRPRSRNP (87 aa)) is disordered. Positions 284-304 (AATAGGPRTSPMSSGGPSAPG) are enriched in low complexity. Positions 288-354 (GGPRTSPMSS…AWTVEDVVWF (67 aa)) constitute an SAM domain. Over residues 312-332 (PKRNTTSLEGNRCASSPSQDA) the composition is skewed to polar residues.

Belongs to the SCM family.

Its subcellular location is the nucleus. Putative Polycomb group (PcG) protein. PcG proteins act by forming multiprotein complexes, which are required to maintain the transcriptionally repressive state of homeotic genes throughout development. This is Sex comb on midleg-like protein 4 (SCML4) from Homo sapiens (Human).